We begin with the raw amino-acid sequence, 267 residues long: Thymidylate synthase (267 aa).

Arginine 24 contacts dUMP. A (6R)-5,10-methylene-5,6,7,8-tetrahydrofolate-binding site is contributed by histidine 54. 129–130 serves as a coordination point for dUMP; that stretch reads RR. Cysteine 149 (nucleophile) is an active-site residue. Residues 169–172, asparagine 180, and 210–212 each bind dUMP; these read RSAD and HIY. (6R)-5,10-methylene-5,6,7,8-tetrahydrofolate is bound at residue aspartate 172. Alanine 266 is a binding site for (6R)-5,10-methylene-5,6,7,8-tetrahydrofolate.

This sequence belongs to the thymidylate synthase family. Bacterial-type ThyA subfamily. In terms of assembly, homodimer.

The protein localises to the cytoplasm. The enzyme catalyses dUMP + (6R)-5,10-methylene-5,6,7,8-tetrahydrofolate = 7,8-dihydrofolate + dTMP. It functions in the pathway pyrimidine metabolism; dTTP biosynthesis. Functionally, catalyzes the reductive methylation of 2'-deoxyuridine-5'-monophosphate (dUMP) to 2'-deoxythymidine-5'-monophosphate (dTMP) while utilizing 5,10-methylenetetrahydrofolate (mTHF) as the methyl donor and reductant in the reaction, yielding dihydrofolate (DHF) as a by-product. This enzymatic reaction provides an intracellular de novo source of dTMP, an essential precursor for DNA biosynthesis. The polypeptide is Thymidylate synthase (Arthrobacter sp. (strain FB24)).